The following is a 1525-amino-acid chain: MNWIPNVQKRAFHYVLNRLALFSDLELDNMDISLGTAQKAALTNVKLDPDRVSLPAGMYMRSGKIDEVSVEMRLLGGAGIAVKIDGVHITASMKQMDVETATEHVEEFLERTTADLAASILSEDLSASLQIDPAEEPPLLGMGGSGISEALVKKVTQTVLSQLTVDVTNVHVTLFVAADDKMDLVVDEVRLRPQGGQEMALEVRGVKMKVMDKKARGTSAPVTAGSTAHATTGFTSESDSDSDTDPFSNAKKSLLQSTIFSHEEASSIYMSAIAESANLGFESDPLFGVFYVDTIDVLVFLGEEMRVSCEVGIVRASLDLLPTVILSLVKVGNGGSGGKKSRDSETKEGTAMDLNMSIKSISASICQLGDDWEFKNIDTNLLFSLSDISGSSGAFHKLQIGVCEVKRGSTRVFGFESDEKNTDDEEPTPRDSDILLKASSASFTLVLPKKAVGVFTIPDLIDVVSLITYLLSLIESKQQKAATMTERSERAGASKTTVQTNTFDFDVAGHKLYILPIRLSNGQMSLSRVSFGDVHVKGISFENSIVSVDKVDFDIGLPIVEELHQLLLPIIDAMNSAKNRPVPASVQTAPPKLLRIVEEPVNASSLVINVARVKGKVDLGGKVGVIEVVLGGISVTGPTDRIEISTVEIGRDLSDLGLSKKWLLHPLKRESNVVVELSSGQIQLITVKNCALEFYTELLELFGGKGDDTKAAELQESSSPDSSSRESSSGSESPPKRIPLQIHNCAVGLNPTNSSSSAQFIVKHVTCEIKPSPTFSMTSFIGSASLLLIDDASLVTPNPTDLMSSYLEQYTSVASLTATSISISTSPGNPTCININGDTVTLSTCADSTQTLIHLINSLKPAVELSGAKFQLETLDPFLNTFQDVDDCFFKAKNKDACESSCSSDNDDIDMVSDDVPNNMSFVESYYGGDKPSQSRKSGRQKMAESYTHADFLLDSDLDSLVKRERVRFEEICFEEDYFDKEEEDMPVMSRPRASSHDLASSNELLTPPTVVINIDLIHNIVCNFHDGYDWQYTRNEINGAVDGLKKRMKERPVVEEPPVMTTDLLFNSIYIQAKDEDDLDDVVGEQTEPAKPKEANKSRRGLLSRSSNPLVQVWLQGIACLLTVYAGLEDPDLPPGQVLNSLDVKIKDVEIIDHVPTSTWNKFLTYMRSRGEREAGAVMAHITMQNVKPVSTLSSQEVICHVTILPLRLHVDQDTLDFLTRFFNFKDVRTTAPPDETFIQKFDIRDVPVKLDYKPKKVDYSGLKSGKSTELMNFFILDESDMVLRRIKLRGITGFANLGQKLNDIWMPDVRRTQLPGVLAGVAPVRPLVNLGGGIRNLIVVPVREYKKDGRVVRSLNQGAYAFAKTTTNELVRFGAKLAVGTQNLLEGVVSTERAGESRDLDDSDLESTTKYYTYMGYSDSNNKLISLYANQPLGVYAGLQDAYSSFGKHMNVAKTAIHNLSEDISEADTAGAAAYAVVKAAPVALIRPIIGTTEAVSKTLFGVANEMDPSGRELARDKYKEAN.

Disordered stretches follow at residues 216–247 and 712–738; these read RGTS…TDPF and AELQ…PKRI. The span at 220 to 230 shows a compositional bias: polar residues; that stretch reads APVTAGSTAHA. The segment covering 716 to 733 has biased composition (low complexity); that stretch reads ESSSPDSSSRESSSGSES.

Belongs to the ATG2 family.

Its subcellular location is the preautophagosomal structure membrane. The protein resides in the endoplasmic reticulum membrane. The enzyme catalyses a 1,2-diacyl-sn-glycero-3-phosphocholine(in) = a 1,2-diacyl-sn-glycero-3-phosphocholine(out). The catalysed reaction is a 1,2-diacyl-sn-glycero-3-phospho-L-serine(in) = a 1,2-diacyl-sn-glycero-3-phospho-L-serine(out). It carries out the reaction a 1,2-diacyl-sn-glycero-3-phosphoethanolamine(in) = a 1,2-diacyl-sn-glycero-3-phosphoethanolamine(out). Functionally, lipid transfer protein required for autophagosome completion and peroxisome degradation. Tethers the edge of the isolation membrane (IM) to the endoplasmic reticulum (ER) and mediates direct lipid transfer from ER to IM for IM expansion. ATG2 binds to the ER exit site (ERES), which is the membrane source for autophagosome formation, using basic residues in its N-terminal region (NR) and to the expanding edge of the IM through its C-terminal region. The latter binding is assisted by an ATG18-PtdIns3P interaction. ATG2 then extracts phospholipids from the membrane source using its NR and transfers them to ATG9 to the IM through its predicted beta-sheet-rich structure for membrane expansion. The chain is Autophagy-related protein 2 (ATG2) from Yarrowia lipolytica (strain CLIB 122 / E 150) (Yeast).